A 43-amino-acid chain; its full sequence is Oxygen-evolving enhancer protein 2 (43 aa).

Belongs to the PsbP family.

It is found in the plastid. It localises to the chloroplast thylakoid membrane. Its function is as follows. May be involved in the regulation of photosystem II. In Physcomitrium patens (Spreading-leaved earth moss), this protein is Oxygen-evolving enhancer protein 2.